An 878-amino-acid chain; its full sequence is F-box DNA helicase protein 1 (878 aa).

Residues 8-56 enclose the F-box domain; that stretch reads SCKFYRLPLEIIPLICRFLSVQDIQSFIRVFPSFQTILDSSNDLFWKKK.

Belongs to the helicase family. UvrD subfamily. In terms of assembly, part of the E3 ubiquitin ligase Skp1-Cullin-1-F-box (SCF) complex. Interacts with skp1 and ssb1. It depends on Mg(2+) as a cofactor. The cofactor is Mn(2+).

It is found in the cytoplasm. It localises to the nucleus. It catalyses the reaction Couples ATP hydrolysis with the unwinding of duplex DNA by translocating in the 3'-5' direction.. It carries out the reaction ATP + H2O = ADP + phosphate + H(+). Its pathway is protein modification; protein ubiquitination. Involved in ATP-dependent DNA-unwinding in a 3' to 5' direction, and ATP-ase activities stimulated by the single-stranded DNA-binding protein ssb1. Essential for viability and normal growth of stationary phase cells and in the absence of either srs2 or rqh1 DNA helicase. Involved in DNA recombination repair of strand breaks and stalled or collapsed replication forks, on the rhp51-dependent pathway: promotes rhp51 filament dissolution from stalled forks, thereby inhibiting homologous recombination and preventing excessive recombination. Ubiquitination and DNA helicase activities are essential for controlling rhp51-dependent recombination in the absence of rad22. Plays a role in the processing of toxic recombination intermediates. Promotes proper chromosome segregation. This is F-box DNA helicase protein 1 (fbh1) from Schizosaccharomyces pombe (strain 972 / ATCC 24843) (Fission yeast).